The following is a 60-amino-acid chain: Large ribosomal subunit protein bL32 (60 aa).

It belongs to the bacterial ribosomal protein bL32 family.

The chain is Large ribosomal subunit protein bL32 from Persephonella marina (strain DSM 14350 / EX-H1).